We begin with the raw amino-acid sequence, 87 residues long: Guanine nucleotide-binding protein subunit gamma (87 aa).

Residue Cys84 is modified to Cysteine methyl ester. Residue Cys84 is the site of S-geranylgeranyl cysteine attachment. Residues 85–87 constitute a propeptide, removed in mature form; it reads LLV.

This sequence belongs to the G protein gamma family. G proteins are composed of 3 units, alpha, beta and gamma. In terms of processing, the N-terminus is blocked.

It localises to the cell membrane. Guanine nucleotide-binding proteins (G proteins) are involved as a modulator or transducer in various transmembrane signaling systems. This major G-protein of the squid photoreceptor is involved in visual transduction. The beta and gamma chains are required for the GTPase activity, for replacement of GDP by GTP, and for G protein-effector interaction. The chain is Guanine nucleotide-binding protein subunit gamma from Loligo forbesii (Veined squid).